Consider the following 665-residue polypeptide: Mitochondrial Rho GTPase 1 (665 aa).

Residues 1-634 (MTNDVIRIVV…NQDPEEETNT (634 aa)) are Cytoplasmic-facing. Positions 3–177 (NDVIRIVVCG…FYLCQKAVMH (175 aa)) constitute a Miro 1 domain. GTP-binding positions include 12-19 (GDEGVGKS), 61-67 (DTQFSNS), and 119-122 (NVFD). EF-hand domains are found at residues 193–228 (NAVAALQRVFFLSDRDQDGYLSDQEMLELQVKCFGR) and 313–348 (EGYRFLVDLFLLFDKDNDGGLNDSELKTLFKPTPGI). Positions 206, 208, 210, 212, 217, 326, 328, 330, and 337 each coordinate Ca(2+). The Miro 2 domain maps to 452-618 (RSVFNCFVLG…FIQLAEAAQQ (167 aa)). GTP-binding positions include 461–468 (GSHMSGKT), 498–502 (EMTGG), and 567–570 (LKAD). Residues 635 to 655 (IMPFALAGGATVLLAAAVAWI) traverse the membrane as a helical; Anchor for type IV membrane protein segment. Residues 656 to 665 (FKNVRVAGRE) are Mitochondrial intermembrane-facing.

The protein belongs to the mitochondrial Rho GTPase family.

Its subcellular location is the mitochondrion outer membrane. Mitochondrial GTPase involved in mitochondrial trafficking. Probably involved in control of anterograde transport of mitochondria and their subcellular distribution. The sequence is that of Mitochondrial Rho GTPase 1 (GEM1) from Yarrowia lipolytica (strain CLIB 122 / E 150) (Yeast).